Reading from the N-terminus, the 231-residue chain is Orotate phosphoribosyltransferase (231 aa).

Residues lysine 27, 79-80 (YK), arginine 106, lysine 107, lysine 110, histidine 112, and 133-141 (DDVMTAGTA) each bind 5-phospho-alpha-D-ribose 1-diphosphate. Threonine 137 and arginine 166 together coordinate orotate.

The protein belongs to the purine/pyrimidine phosphoribosyltransferase family. PyrE subfamily. As to quaternary structure, homodimer. It depends on Mg(2+) as a cofactor.

It carries out the reaction orotidine 5'-phosphate + diphosphate = orotate + 5-phospho-alpha-D-ribose 1-diphosphate. It participates in pyrimidine metabolism; UMP biosynthesis via de novo pathway; UMP from orotate: step 1/2. Catalyzes the transfer of a ribosyl phosphate group from 5-phosphoribose 1-diphosphate to orotate, leading to the formation of orotidine monophosphate (OMP). The protein is Orotate phosphoribosyltransferase of Bifidobacterium adolescentis (strain ATCC 15703 / DSM 20083 / NCTC 11814 / E194a).